Reading from the N-terminus, the 196-residue chain is Peptidyl-tRNA hydrolase (196 aa).

Tyr-19 contributes to the tRNA binding site. The Proton acceptor role is filled by His-24. Positions 68, 70, and 116 each coordinate tRNA.

It belongs to the PTH family. As to quaternary structure, monomer.

It is found in the cytoplasm. It carries out the reaction an N-acyl-L-alpha-aminoacyl-tRNA + H2O = an N-acyl-L-amino acid + a tRNA + H(+). Functionally, hydrolyzes ribosome-free peptidyl-tRNAs (with 1 or more amino acids incorporated), which drop off the ribosome during protein synthesis, or as a result of ribosome stalling. Its function is as follows. Catalyzes the release of premature peptidyl moieties from peptidyl-tRNA molecules trapped in stalled 50S ribosomal subunits, and thus maintains levels of free tRNAs and 50S ribosomes. The sequence is that of Peptidyl-tRNA hydrolase from Aromatoleum aromaticum (strain DSM 19018 / LMG 30748 / EbN1) (Azoarcus sp. (strain EbN1)).